A 325-amino-acid polypeptide reads, in one-letter code: GTP 3',8-cyclase (325 aa).

One can recognise a Radical SAM core domain in the interval 10–229; sequence GYGRRINYLR…PSLEKIKSED (220 aa). Arg-19 is a binding site for GTP. Positions 26 and 30 each coordinate [4Fe-4S] cluster. Residue Tyr-32 participates in S-adenosyl-L-methionine binding. [4Fe-4S] cluster is bound at residue Cys-33. A GTP-binding site is contributed by Arg-69. Position 73 (Gly-73) interacts with S-adenosyl-L-methionine. Residue Thr-100 coordinates GTP. Ser-124 contacts S-adenosyl-L-methionine. Lys-161 contributes to the GTP binding site. Residue Met-195 coordinates S-adenosyl-L-methionine. Cys-257 and Cys-260 together coordinate [4Fe-4S] cluster. 262-264 lines the GTP pocket; that stretch reads RLR. Cys-274 provides a ligand contact to [4Fe-4S] cluster.

It belongs to the radical SAM superfamily. MoaA family. In terms of assembly, monomer and homodimer. It depends on [4Fe-4S] cluster as a cofactor.

It catalyses the reaction GTP + AH2 + S-adenosyl-L-methionine = (8S)-3',8-cyclo-7,8-dihydroguanosine 5'-triphosphate + 5'-deoxyadenosine + L-methionine + A + H(+). The protein operates within cofactor biosynthesis; molybdopterin biosynthesis. In terms of biological role, catalyzes the cyclization of GTP to (8S)-3',8-cyclo-7,8-dihydroguanosine 5'-triphosphate. This chain is GTP 3',8-cyclase, found in Peptoclostridium acidaminophilum (Eubacterium acidaminophilum).